A 162-amino-acid chain; its full sequence is Peptidyl-prolyl cis-trans isomerase (162 aa).

Ser2 carries the post-translational modification N-acetylserine. The region spanning 5 to 161 is the PPIase cyclophilin-type domain; it reads YFDVEADGQP…ARIVVAKSGE (157 aa). Residues Lys29 and Lys42 each participate in a glycyl lysine isopeptide (Lys-Gly) (interchain with G-Cter in ubiquitin) cross-link. Thr71 carries the phosphothreonine modification. Residues Lys123 and Lys139 each participate in a glycyl lysine isopeptide (Lys-Gly) (interchain with G-Cter in ubiquitin) cross-link. Residues Ser142 and Ser145 each carry the phosphoserine modification. Residues Lys151 and Lys158 each participate in a glycyl lysine isopeptide (Lys-Gly) (interchain with G-Cter in ubiquitin) cross-link.

Belongs to the cyclophilin-type PPIase family. PPIase A subfamily. In terms of assembly, interacts with a complex composed of SIN3 and RPD3. Identified in the Set3C complex with HOS2, HST1, SNT1, SIF2, HOS4/YIL112W and SET3.

It is found in the cytoplasm. The protein resides in the nucleus. The protein localises to the mitochondrion intermembrane space. The catalysed reaction is [protein]-peptidylproline (omega=180) = [protein]-peptidylproline (omega=0). Binds cyclosporin A (CsA). CsA mediates some of its effects via an inhibitory action on PPIase. Functionally, PPIases accelerate the folding of proteins. It catalyzes the cis-trans isomerization of proline imidic peptide bonds in oligopeptides. Involved in histone deacetylase complexes, suggesting a function in chromatin. Imports fructose-1,6-bisphosphatase (FBPase) into the intermediate vacuole import and degradation (Vid) vesicles. Regulates the meiotic gene program via the Set3C histone deacetylase complex to promote efficient sporulation, and the prolyl-isomerase activity is required for this function. This is Peptidyl-prolyl cis-trans isomerase (CPR1) from Saccharomyces cerevisiae (strain ATCC 204508 / S288c) (Baker's yeast).